A 164-amino-acid polypeptide reads, in one-letter code: Nucleotide-binding protein Acid345_2028 (164 aa).

It belongs to the YajQ family.

In terms of biological role, nucleotide-binding protein. The sequence is that of Nucleotide-binding protein Acid345_2028 from Koribacter versatilis (strain Ellin345).